We begin with the raw amino-acid sequence, 417 residues long: Gamma-glutamyl phosphate reductase (417 aa).

Belongs to the gamma-glutamyl phosphate reductase family.

It is found in the cytoplasm. It catalyses the reaction L-glutamate 5-semialdehyde + phosphate + NADP(+) = L-glutamyl 5-phosphate + NADPH + H(+). It participates in amino-acid biosynthesis; L-proline biosynthesis; L-glutamate 5-semialdehyde from L-glutamate: step 2/2. Catalyzes the NADPH-dependent reduction of L-glutamate 5-phosphate into L-glutamate 5-semialdehyde and phosphate. The product spontaneously undergoes cyclization to form 1-pyrroline-5-carboxylate. The sequence is that of Gamma-glutamyl phosphate reductase from Shigella boydii serotype 18 (strain CDC 3083-94 / BS512).